The chain runs to 100 residues: uncharacterized protein (100 aa).

The next 2 helical transmembrane spans lie at 17-37 (IIIL…SVSF) and 78-98 (MVDK…TIPF).

The protein resides in the endoplasmic reticulum membrane. This is an uncharacterized protein from Saccharomyces cerevisiae (strain ATCC 204508 / S288c) (Baker's yeast).